The primary structure comprises 57 residues: MSLYQHMLVFYAVMAAIAFLITWFLSHDKKRIRFLSAFLVGATWPMSFPVALLFSLF.

The next 2 helical transmembrane spans lie at 6-26 (HMLV…WFLS) and 34-54 (FLSA…ALLF).

It belongs to the GhoT/OrtT toxin family.

The protein resides in the cell inner membrane. Acts as an orphan toxin which is important for maintaining cell fitness during stress related to the stringent response. Increases the formation of persister cells. Has no known antitoxin. This chain is Orphan toxin OrtT, found in Escherichia coli O6:H1 (strain CFT073 / ATCC 700928 / UPEC).